A 515-amino-acid polypeptide reads, in one-letter code: Maturase K (515 aa).

The protein belongs to the intron maturase 2 family. MatK subfamily.

The protein resides in the plastid. The protein localises to the chloroplast. Functionally, usually encoded in the trnK tRNA gene intron. Probably assists in splicing its own and other chloroplast group II introns. The polypeptide is Maturase K (Ceratophyllum demersum (Rigid hornwort)).